The following is a 227-amino-acid chain: UPF0758 protein LPC_1989 (227 aa).

The region spanning 102-225 is the MPN domain; that stretch reads QLSNTQQTYA…YSIFAENKWV (124 aa). Residues His-173, His-175, and Asp-186 each contribute to the Zn(2+) site. Positions 173–186 match the JAMM motif motif; it reads HNHPSGLSDASQQD.

This sequence belongs to the UPF0758 family.

The protein is UPF0758 protein LPC_1989 of Legionella pneumophila (strain Corby).